The primary structure comprises 426 residues: Transcriptional enhancer factor TEF-1 (426 aa).

An N-acetylmethionine modification is found at M1. The segment covering 1 to 12 has biased composition (polar residues); it reads MEPSSWSGSESP. Residues 1–31 are disordered; sequence MEPSSWSGSESPAENMERMSDSADKPIDNDA. At S11 the chain carries Phosphoserine. The span at 15-28 shows a compositional bias: basic and acidic residues; that stretch reads NMERMSDSADKPID. The segment at residues 28–104 is a DNA-binding region (TEA); the sequence is DNDAEGVWSP…QVLARRKSRD (77 aa). K108 is subject to N6-lactoyllysine. The tract at residues 167-426 is transcriptional activation; it reads GSSQDVKPFV…QHHIYRLVKD (260 aa).

In terms of assembly, interacts with YAP1 and WWTR1/TAZ. Post-translationally, lactylation by AARS1 promotes nuclear localization and stabilization of YAP1, leading to increased Hippo signaling pathway. Delactylated by SIRT1. Preferentially expressed in skeletal muscle. Lower levels in pancreas, placenta, and heart.

The protein resides in the nucleus. Transcription factor which plays a key role in the Hippo signaling pathway, a pathway involved in organ size control and tumor suppression by restricting proliferation and promoting apoptosis. The core of this pathway is composed of a kinase cascade wherein MST1/MST2, in complex with its regulatory protein SAV1, phosphorylates and activates LATS1/2 in complex with its regulatory protein MOB1, which in turn phosphorylates and inactivates YAP1 oncoprotein and WWTR1/TAZ. Acts by mediating gene expression of YAP1 and WWTR1/TAZ, thereby regulating cell proliferation, migration and epithelial mesenchymal transition (EMT) induction. Binds specifically and cooperatively to the SPH and GT-IIC 'enhansons' (5'-GTGGAATGT-3') and activates transcription in vivo in a cell-specific manner. The activation function appears to be mediated by a limiting cell-specific transcriptional intermediary factor (TIF). Involved in cardiac development. Binds to the M-CAT motif. This chain is Transcriptional enhancer factor TEF-1 (TEAD1), found in Homo sapiens (Human).